A 745-amino-acid chain; its full sequence is Immunoglobulin superfamily containing leucine-rich repeat protein 2 (745 aa).

Positions 1–18 (MFPLRALWLVWALLGVAG) are cleaved as a signal peptide. One can recognise an LRRNT domain in the interval 19–51 (SCPEPCACVDKYAHQFADCAYKELREVPEGLPA). The Extracellular portion of the chain corresponds to 19-589 (SCPEPCACVD…VFSTKKELPS (571 aa)). A glycan (N-linked (GlcNAc...) asparagine) is linked at N52. LRR repeat units lie at residues 52–73 (NVTT…AFAD), 76–97 (QVTS…ALAV), 100–123 (QLKN…RNLS), 124–145 (ALQL…ALGA), and 148–169 (DLRS…TFDA). N121 carries N-linked (GlcNAc...) asparagine glycosylation. Residues 181–232 (NPFHCGCGLVWLQAWAASTRVSLPEPDSIACASPPALQGVPVYRLPALPCAP) form the LRRCT domain. Residues 233–371 (PSVHLSAEPP…GANSTSIRVA (139 aa)) form the Ig-like domain. C260 and C355 are disulfide-bonded. Positions 287–326 (VLSGEDDGVGAEEGEGEGDGDLLTQTQAQTPTPAPAWPAP) are disordered. The span at 290-306 (GEDDGVGAEEGEGEGDG) shows a compositional bias: acidic residues. N-linked (GlcNAc...) asparagine glycosylation is found at N337 and N364. Residues 375–466 (TGPPKHAPGA…QRCGNGDPSR (92 aa)) form a disordered region. Residues 431–449 (TETEPEEDTSEGEEAEDQI) are compositionally biased toward acidic residues. N-linked (GlcNAc...) asparagine glycans are attached at residues N474 and N563. Residues 590–610 (LLVIVAVSVFLLVLATVPLLG) traverse the membrane as a helical segment. Topologically, residues 611–745 (AACCHLLAKH…INGNYRQTAG (135 aa)) are cytoplasmic. Positions 656-722 (KSYPAGGEAG…FEAGSEYSDR (67 aa)) are disordered. Residues 665–683 (GGEEPEDVQGEGLDEDAEQ) are compositionally biased toward acidic residues. The residue at position 719 (Y719) is a Phosphotyrosine. S720 is subject to Phosphoserine.

As to quaternary structure, homomultimer. Interacts with NTRK1/TrkA.

The protein resides in the cell membrane. Its function is as follows. Required for axon extension during neural development. The protein is Immunoglobulin superfamily containing leucine-rich repeat protein 2 (ISLR2) of Homo sapiens (Human).